Here is a 115-residue protein sequence, read N- to C-terminus: Large ribosomal subunit protein uL18 (115 aa).

This sequence belongs to the universal ribosomal protein uL18 family. In terms of assembly, part of the 50S ribosomal subunit; part of the 5S rRNA/L5/L18/L25 subcomplex. Contacts the 5S and 23S rRNAs.

Functionally, this is one of the proteins that bind and probably mediate the attachment of the 5S RNA into the large ribosomal subunit, where it forms part of the central protuberance. In Rickettsia rickettsii (strain Iowa), this protein is Large ribosomal subunit protein uL18.